Consider the following 384-residue polypeptide: Trophoblast glycoprotein-like (384 aa).

The first 30 residues, 1–30 (MAPRAGQRGLWSPLPGLLLLAAALSRPAAP), serve as a signal peptide directing secretion. Cystine bridges form between Cys-31–Cys-37 and Cys-35–Cys-47. The Extracellular segment spans residues 31 to 309 (CPFQCYCFGS…DVAGPELEAS (279 aa)). LRR repeat units follow at residues 61–84 (PPDA…AFAG), 95–118 (LPLL…AFDG), 119–142 (LPSL…AFRG), 173–196 (LAEL…ALRL), and 198–219 (RLEQ…ELSA). N-linked (GlcNAc...) asparagine glycosylation occurs at Asn-66. Disulfide bonds link Cys-240–Cys-266 and Cys-242–Cys-287. A helical membrane pass occupies residues 310 to 330 (YVFFGLVLALIGLIFLMVLYL). Over 331–384 (NRRGIQRWMHNLREACRDQMEGYHYRYEQDADPRRAPAPAAPAGSRATSPGSGL) the chain is Cytoplasmic. The disordered stretch occupies residues 361–384 (ADPRRAPAPAAPAGSRATSPGSGL). A compositionally biased stretch (low complexity) spans 367–384 (PAPAAPAGSRATSPGSGL).

The protein resides in the membrane. The protein is Trophoblast glycoprotein-like (Tpbgl) of Mus musculus (Mouse).